Consider the following 570-residue polypeptide: Urease subunit alpha (570 aa).

In terms of domain architecture, Urease spans 131-570 (GGMDSHIHFI…LPMAQRYFLF (440 aa)). Histidine 136, histidine 138, and lysine 219 together coordinate Ni(2+). N6-carboxylysine is present on lysine 219. Histidine 221 serves as a coordination point for substrate. Ni(2+)-binding residues include histidine 248 and histidine 274. Histidine 322 serves as the catalytic Proton donor. Aspartate 362 lines the Ni(2+) pocket.

This sequence belongs to the metallo-dependent hydrolases superfamily. Urease alpha subunit family. In terms of assembly, heterotrimer of UreA (gamma), UreB (beta) and UreC (alpha) subunits. Three heterotrimers associate to form the active enzyme. Ni cation is required as a cofactor. Post-translationally, carboxylation allows a single lysine to coordinate two nickel ions.

It is found in the cytoplasm. It catalyses the reaction urea + 2 H2O + H(+) = hydrogencarbonate + 2 NH4(+). It participates in nitrogen metabolism; urea degradation; CO(2) and NH(3) from urea (urease route): step 1/1. The chain is Urease subunit alpha from Sinorhizobium fredii (strain NBRC 101917 / NGR234).